Here is a 527-residue protein sequence, read N- to C-terminus: UDP-glucuronosyltransferase 2A3 (527 aa).

An N-terminal signal peptide occupies residues 1–23 (MRSDKSALVFLLLQLFCVGCGFC). Residues 24 to 491 (GKVLVWPCDM…TWFQHYSIDV (468 aa)) are Extracellular-facing. N313 carries an N-linked (GlcNAc...) asparagine glycan. Residues 492–512 (IGFLLACVATAIFLFTKCFLF) form a helical membrane-spanning segment. At 513–527 (SCQKFNKTRKIEKRE) the chain is on the cytoplasmic side.

This sequence belongs to the UDP-glycosyltransferase family.

The protein resides in the membrane. The enzyme catalyses glucuronate acceptor + UDP-alpha-D-glucuronate = acceptor beta-D-glucuronoside + UDP + H(+). In terms of biological role, UDP-glucuronosyltransferases catalyze phase II biotransformation reactions in which lipophilic substrates are conjugated with glucuronic acid to increase water solubility and enhance excretion. They are of major importance in the conjugation and subsequent elimination of potentially toxic xenobiotics and endogenous compounds. The protein is UDP-glucuronosyltransferase 2A3 (UGT2A3) of Homo sapiens (Human).